We begin with the raw amino-acid sequence, 55 residues long: Large ribosomal subunit protein bL33 (55 aa).

This sequence belongs to the bacterial ribosomal protein bL33 family.

The polypeptide is Large ribosomal subunit protein bL33 (Rhizobium meliloti (strain 1021) (Ensifer meliloti)).